The chain runs to 785 residues: AP-1 complex subunit gamma-like 2 (785 aa).

The tract at residues 369–379 is essential for ubiquitin-binding; that stretch reads LSLALVNSSNV. The segment at 592–617 is disordered; sequence GPQADEEAKESKEAAQLSEAAPVPTE. The GAE domain occupies 665-780; the sequence is APIPDLKVFE…QEIFEVNNLP (116 aa).

It belongs to the adaptor complexes large subunit family. In terms of assembly, may interact with AP1S1/Sigma1A-adaptin and AP1S2/Sigma1B-adaptin. Probably does not interact with APB1. Interacts (via GAE domain) with RABEP1, NECAP1, CLINT1 and AFTPH/aftiphilin. (Microbial infection) Interacts with HBV major surface antigen L. Interacts with HBV core protein C in a ubiquitin-dependent manner. Expressed in all but one (skeletal muscle) tissues examined.

The protein resides in the golgi apparatus membrane. Its subcellular location is the cytoplasmic vesicle membrane. It is found in the endosome membrane. In terms of biological role, may function in protein sorting in late endosomes or multivesucular bodies (MVBs). Its function is as follows. (Microbial infection) Involved in MVB-assisted maturation of hepatitis B virus (HBV). The protein is AP-1 complex subunit gamma-like 2 (AP1G2) of Homo sapiens (Human).